Here is a 225-residue protein sequence, read N- to C-terminus: MPNNAQAFVNVQTTVIPKTAFTAHDFVNYTLPKDKKKQNDTENKKKQPKDGENDKQKEQAETQPFEWIQQKDADDKKESNTANTSDSLAYADFAVLELTLFLDNPVDKKVFDHFIQPAIKTYEQLGNSLKLFAKPTLTELKNHRYYLSGYPFLENKVNVLSVNQIKKDTSTETTINGQTVQQSNHEQPLIVRSTIAKPTLIRNQGDDFNGSNWVWNYDNSRVFRF.

Positions 32-82 (PKDKKKQNDTENKKKQPKDGENDKQKEQAETQPFEWIQQKDADDKKESNTA) are disordered. Composition is skewed to basic and acidic residues over residues 37–60 (KQND…KEQA) and 69–79 (QQKDADDKKES).

Belongs to the MG067/MG068/MG395 family.

This is an uncharacterized protein from Mycoplasma pneumoniae (strain ATCC 29342 / M129 / Subtype 1) (Mycoplasmoides pneumoniae).